Here is a 285-residue protein sequence, read N- to C-terminus: Bifunctional protein FolD (285 aa).

Residues 165-167, S190, and I231 contribute to the NADP(+) site; that span reads GRS.

Belongs to the tetrahydrofolate dehydrogenase/cyclohydrolase family. Homodimer.

The enzyme catalyses (6R)-5,10-methylene-5,6,7,8-tetrahydrofolate + NADP(+) = (6R)-5,10-methenyltetrahydrofolate + NADPH. The catalysed reaction is (6R)-5,10-methenyltetrahydrofolate + H2O = (6R)-10-formyltetrahydrofolate + H(+). It functions in the pathway one-carbon metabolism; tetrahydrofolate interconversion. Its function is as follows. Catalyzes the oxidation of 5,10-methylenetetrahydrofolate to 5,10-methenyltetrahydrofolate and then the hydrolysis of 5,10-methenyltetrahydrofolate to 10-formyltetrahydrofolate. In Magnetococcus marinus (strain ATCC BAA-1437 / JCM 17883 / MC-1), this protein is Bifunctional protein FolD.